The chain runs to 217 residues: Small ribosomal subunit protein uS3 (217 aa).

Residues 38-106 form the KH type-2 domain; it reads IRKFINKELA…QVHINIIEIK (69 aa).

It belongs to the universal ribosomal protein uS3 family. In terms of assembly, part of the 30S ribosomal subunit. Forms a tight complex with proteins S10 and S14.

Functionally, binds the lower part of the 30S subunit head. Binds mRNA in the 70S ribosome, positioning it for translation. The chain is Small ribosomal subunit protein uS3 from Streptococcus pyogenes serotype M6 (strain ATCC BAA-946 / MGAS10394).